The sequence spans 221 residues: Translation initiation factor 6 (221 aa).

The protein belongs to the eIF-6 family.

Binds to the 50S ribosomal subunit and prevents its association with the 30S ribosomal subunit to form the 70S initiation complex. This is Translation initiation factor 6 from Nitrosopumilus maritimus (strain SCM1).